Reading from the N-terminus, the 454-residue chain is MSQTDTITALATPPGRGSVGILRVSGPLAAPVARALLGKLPRPRQAEYLPFRDDDGTTLDQGIALFFPGPHSFTGEDVLELQGHGGPVILDLLLQRIVAMPGVRIARPGEFSERAFLNDKLDLAQAEAIADLIDASSAQAARSAINSLQGAFSGRIHELVKALTNLRIYVEAAIDFPDEEIDFLSEGKIEASLNDVIARLERVRTEARQGSLLREGMKVVIAGKPNAGKSSLLNALAGREAAIVTAIAGTTRDVLREHIHLDGMPLHIIDTAGLRNAGDEVERIGIERAWREIEQADHVLLMVDGAATPLSDPDMLWPAFIARLPSGMPVTVVRNKADLTGESVAISDISGYLLITLSAQSGVGMDLLRTHLKQSMGFTGGTEGGFLARRRHLDALETAATHLQQGKEQLVSACYGELLAEELRLAQQSLSEITGEFSSDDLLGRIFSSFCIGK.

(6S)-5-formyl-5,6,7,8-tetrahydrofolate contacts are provided by Arg23, Glu80, and Lys120. One can recognise a TrmE-type G domain in the interval 216–377 (GMKVVIAGKP…LRTHLKQSMG (162 aa)). A K(+)-binding site is contributed by Asn226. GTP is bound by residues 226-231 (NAGKSS), 245-251 (TAIAGTT), 270-273 (DTAG), and 335-338 (NKAD). Ser230 provides a ligand contact to Mg(2+). The K(+) site is built by Thr245, Ile247, and Thr250. Position 251 (Thr251) interacts with Mg(2+). Lys454 provides a ligand contact to (6S)-5-formyl-5,6,7,8-tetrahydrofolate.

It belongs to the TRAFAC class TrmE-Era-EngA-EngB-Septin-like GTPase superfamily. TrmE GTPase family. As to quaternary structure, homodimer. Heterotetramer of two MnmE and two MnmG subunits. K(+) serves as cofactor.

The protein resides in the cytoplasm. In terms of biological role, exhibits a very high intrinsic GTPase hydrolysis rate. Involved in the addition of a carboxymethylaminomethyl (cmnm) group at the wobble position (U34) of certain tRNAs, forming tRNA-cmnm(5)s(2)U34. This chain is tRNA modification GTPase MnmE, found in Sodalis glossinidius (strain morsitans).